The primary structure comprises 495 residues: Catalase B (495 aa).

Positions 1-25 (MSNNKKLTSLFGAPVSDRENSMTAG) are disordered. Residues H55 and N128 contribute to the active site. Y338 contacts heme.

This sequence belongs to the catalase family. As to quaternary structure, homodimer. It depends on heme as a cofactor.

The enzyme catalyses 2 H2O2 = O2 + 2 H2O. In terms of biological role, decomposes hydrogen peroxide into water and oxygen; serves to protect cells from the toxic effects of hydrogen peroxide. The protein is Catalase B (katB) of Staphylococcus xylosus.